The primary structure comprises 383 residues: MAAPARTAPEDDASAVLDELSRNFTYWAPGPGNGSLSSAWYRRNQIHLFGVLLAILGNLVISISLNIQKYSHLHLAQKEHPKPYFKSVLWLSGVLLTALGETGNFAAYGVAPITLIAPLGCMSVTGSAIISVLFLKENLRASDLLGMTLAFAGTYLLVNFAPNITQAISARTVQYYFVGWQFLVYVILEILVFCILLYFHKRKGMKHIVVLLTLVALLASLTVISVKAVSGMITLSVTGKMQLTYAIFYIMLVIMIASCVFQVKFLNQATELYTMTTVVPVNHVFFTTSAIIAGIIFYQEFLGAAFLTVFIYLFGCFLSFLGVFLVTRNREKEHLQQSFVDLGDIPGKQMLDKVQPDSNGLSYGTLPDGGDSTRGQCGEKKES.

2 N-linked (GlcNAc...) asparagine glycosylation sites follow: Asn23 and Asn33. 9 helical membrane-spanning segments follow: residues 46–66 (IHLFGVLLAILGNLVISISLN), 88–108 (VLWLSGVLLTALGETGNFAAY), 115–135 (LIAPLGCMSVTGSAIISVLFL), 144–164 (LLGMTLAFAGTYLLVNFAPNI), 177–197 (FVGWQFLVYVILEILVFCILL), 208–228 (IVVLLTLVALLASLTVISVKA), 243–263 (LTYAIFYIMLVIMIASCVFQV), 278–298 (VVPVNHVFFTTSAIIAGIIFY), and 306–326 (FLTVFIYLFGCFLSFLGVFLV). Residues 352–383 (DKVQPDSNGLSYGTLPDGGDSTRGQCGEKKES) form a disordered region.

Belongs to the NIPA family.

The protein resides in the membrane. This is NIPA-like protein 2 (Nipal2) from Mus musculus (Mouse).